Reading from the N-terminus, the 213-residue chain is Probable nicotinate-nucleotide adenylyltransferase (213 aa).

A disordered region spans residues R194 to R213. Over residues E200–R213 the composition is skewed to basic and acidic residues.

This sequence belongs to the NadD family.

The catalysed reaction is nicotinate beta-D-ribonucleotide + ATP + H(+) = deamido-NAD(+) + diphosphate. It functions in the pathway cofactor biosynthesis; NAD(+) biosynthesis; deamido-NAD(+) from nicotinate D-ribonucleotide: step 1/1. Functionally, catalyzes the reversible adenylation of nicotinate mononucleotide (NaMN) to nicotinic acid adenine dinucleotide (NaAD). This Mycolicibacterium smegmatis (strain ATCC 700084 / mc(2)155) (Mycobacterium smegmatis) protein is Probable nicotinate-nucleotide adenylyltransferase.